Reading from the N-terminus, the 205-residue chain is RNA pyrophosphohydrolase (205 aa).

The Nudix hydrolase domain occupies Gly-6 to Arg-149. The short motif at Gly-38 to Gly-59 is the Nudix box element. Positions Pro-177–Asp-205 are disordered. Positions Pro-187–Gly-196 are enriched in basic residues.

It belongs to the Nudix hydrolase family. RppH subfamily. The cofactor is a divalent metal cation.

Its function is as follows. Accelerates the degradation of transcripts by removing pyrophosphate from the 5'-end of triphosphorylated RNA, leading to a more labile monophosphorylated state that can stimulate subsequent ribonuclease cleavage. The sequence is that of RNA pyrophosphohydrolase from Xanthomonas oryzae pv. oryzae (strain MAFF 311018).